Consider the following 408-residue polypeptide: LL-diaminopimelate aminotransferase (408 aa).

Residues Tyr-15 and Gly-42 each contribute to the substrate site. Residues Tyr-72, 108–109, Tyr-132, Asn-187, Tyr-218, and 246–248 contribute to the pyridoxal 5'-phosphate site; these read SK and SFS. Residues Lys-109, Tyr-132, and Asn-187 each contribute to the substrate site. Residue Lys-249 is modified to N6-(pyridoxal phosphate)lysine. The pyridoxal 5'-phosphate site is built by Arg-257 and Asn-292. Substrate contacts are provided by Asn-292 and Arg-388.

This sequence belongs to the class-I pyridoxal-phosphate-dependent aminotransferase family. LL-diaminopimelate aminotransferase subfamily. In terms of assembly, homodimer. Pyridoxal 5'-phosphate is required as a cofactor.

It carries out the reaction (2S,6S)-2,6-diaminopimelate + 2-oxoglutarate = (S)-2,3,4,5-tetrahydrodipicolinate + L-glutamate + H2O + H(+). It participates in amino-acid biosynthesis; L-lysine biosynthesis via DAP pathway; LL-2,6-diaminopimelate from (S)-tetrahydrodipicolinate (aminotransferase route): step 1/1. Functionally, involved in the synthesis of meso-diaminopimelate (m-DAP or DL-DAP), required for both lysine and peptidoglycan biosynthesis. Catalyzes the direct conversion of tetrahydrodipicolinate to LL-diaminopimelate. In Synechococcus sp. (strain CC9902), this protein is LL-diaminopimelate aminotransferase.